The sequence spans 536 residues: Cytochrome P450 78A7 (536 aa).

Residues 36-56 (LFLAVVFLSIVTWALAGGGGV) traverse the membrane as a helical segment. Cys-481 provides a ligand contact to heme.

The protein belongs to the cytochrome P450 family. Heme is required as a cofactor.

It localises to the membrane. Its function is as follows. Functions probably in association with CYP78A5 in regulating relative growth of the shoot apical meristem and plant organs via a non-cell-autonomous signal. The polypeptide is Cytochrome P450 78A7 (CYP78A7) (Arabidopsis thaliana (Mouse-ear cress)).